The primary structure comprises 381 residues: Chaperone protein DnaJ (381 aa).

Residues Asp-5 to Gly-70 form the J domain. A CR-type zinc finger spans residues Gly-140–Glu-218. Residues Cys-153, Cys-156, Cys-170, Cys-173, Cys-192, Cys-195, Cys-206, and Cys-209 each contribute to the Zn(2+) site. CXXCXGXG motif repeat units follow at residues Cys-153–Gly-160, Cys-170–Gly-177, Cys-192–Gly-199, and Cys-206–Gly-213.

Belongs to the DnaJ family. Homodimer. It depends on Zn(2+) as a cofactor.

It localises to the cytoplasm. Functionally, participates actively in the response to hyperosmotic and heat shock by preventing the aggregation of stress-denatured proteins and by disaggregating proteins, also in an autonomous, DnaK-independent fashion. Unfolded proteins bind initially to DnaJ; upon interaction with the DnaJ-bound protein, DnaK hydrolyzes its bound ATP, resulting in the formation of a stable complex. GrpE releases ADP from DnaK; ATP binding to DnaK triggers the release of the substrate protein, thus completing the reaction cycle. Several rounds of ATP-dependent interactions between DnaJ, DnaK and GrpE are required for fully efficient folding. Also involved, together with DnaK and GrpE, in the DNA replication of plasmids through activation of initiation proteins. In Cereibacter sphaeroides (strain KD131 / KCTC 12085) (Rhodobacter sphaeroides), this protein is Chaperone protein DnaJ.